A 358-amino-acid polypeptide reads, in one-letter code: F-box protein At4g35733 (358 aa).

Residues 4-51 (ATVWSDLPGELLDHIANGLFSKVELLRFRSICKTFRSAVDSDKNFLDH) enclose the F-box domain.

In terms of assembly, part of a SCF (ASK-cullin-F-box) protein ligase complex.

Its pathway is protein modification; protein ubiquitination. In terms of biological role, component of SCF(ASK-cullin-F-box) E3 ubiquitin ligase complexes, which may mediate the ubiquitination and subsequent proteasomal degradation of target proteins. The protein is F-box protein At4g35733 of Arabidopsis thaliana (Mouse-ear cress).